The following is a 408-amino-acid chain: MSWDQVWIDVNVATMSPSVSAPYGAITDAAVAVEKGRIAWIGLRSELPEFDVLSTPVYRGKGAWITPGLIDAHTHLVFAGNRANEFELRLQGASYEEIARSGGGIISTVKACREASEGELFELGRKRLNALAKEGVTTVEIKSGYGLETETELKLLRVARELGKHHHVDVKTTFLGAHAIPPEYKDNAETYVDLVIDEMLPAVIEENLADAADVFCENIAFSVEQTERVLTAAKDAGLDIKLHAEQLSNLGGSAMAARLGAKSVDHIEYLDETGVKALSQSGTCATLLPGAFYFLRETQMPPIELLRKHKVPMVLASDYNPGSSPLCSSLLMLNMGCTLFRLTPEEALAGMTRNAAKALGVEDNVGVLEVGMQADFCLWDITTPAQLSYSYGVGVCLEVVKSGQLVHQ.

Positions 73 and 75 each coordinate Fe(3+). The Zn(2+) site is built by His73 and His75. Positions 82, 145, and 178 each coordinate 4-imidazolone-5-propanoate. Residue Tyr145 participates in N-formimidoyl-L-glutamate binding. Fe(3+) is bound at residue His243. His243 provides a ligand contact to Zn(2+). Gln246 contacts 4-imidazolone-5-propanoate. A Fe(3+)-binding site is contributed by Asp318. Asp318 provides a ligand contact to Zn(2+). Asn320 and Gly322 together coordinate N-formimidoyl-L-glutamate. 4-imidazolone-5-propanoate is bound at residue Ser323.

Belongs to the metallo-dependent hydrolases superfamily. HutI family. Zn(2+) serves as cofactor. It depends on Fe(3+) as a cofactor.

The protein resides in the cytoplasm. The enzyme catalyses 4-imidazolone-5-propanoate + H2O = N-formimidoyl-L-glutamate. It participates in amino-acid degradation; L-histidine degradation into L-glutamate; N-formimidoyl-L-glutamate from L-histidine: step 3/3. Its function is as follows. Catalyzes the hydrolytic cleavage of the carbon-nitrogen bond in imidazolone-5-propanoate to yield N-formimidoyl-L-glutamate. It is the third step in the universal histidine degradation pathway. This Shewanella sediminis (strain HAW-EB3) protein is Imidazolonepropionase.